A 261-amino-acid chain; its full sequence is Taurine import ATP-binding protein TauB (261 aa).

Positions 4–233 constitute an ABC transporter domain; it reads LQLEGIGAHY…RYSAGESARA (230 aa). Residue 38–45 coordinates ATP; it reads GPSGSGKT.

Belongs to the ABC transporter superfamily. Taurine importer (TC 3.A.1.17.1) family. As to quaternary structure, the complex is composed of two ATP-binding proteins (TauB), two transmembrane proteins (TauC) and a solute-binding protein (TauA).

The protein localises to the cell inner membrane. It carries out the reaction taurine(out) + ATP + H2O = taurine(in) + ADP + phosphate + H(+). Functionally, part of the ABC transporter complex TauABC involved in taurine import. Responsible for energy coupling to the transport system. The sequence is that of Taurine import ATP-binding protein TauB from Pseudomonas syringae pv. tomato (strain ATCC BAA-871 / DC3000).